Consider the following 339-residue polypeptide: Anthranilate phosphoribosyltransferase (339 aa).

Residues G81, 84–85, T89, 91–94, 109–117, and A121 contribute to the 5-phospho-alpha-D-ribose 1-diphosphate site; these read GD, NIST, and KHGNRNLSS. G81 contributes to the anthranilate binding site. Mg(2+) is bound at residue S93. Position 112 (N112) interacts with anthranilate. An anthranilate-binding site is contributed by R167. D226 and E227 together coordinate Mg(2+).

Belongs to the anthranilate phosphoribosyltransferase family. Homodimer. It depends on Mg(2+) as a cofactor.

It carries out the reaction N-(5-phospho-beta-D-ribosyl)anthranilate + diphosphate = 5-phospho-alpha-D-ribose 1-diphosphate + anthranilate. The protein operates within amino-acid biosynthesis; L-tryptophan biosynthesis; L-tryptophan from chorismate: step 2/5. Functionally, catalyzes the transfer of the phosphoribosyl group of 5-phosphorylribose-1-pyrophosphate (PRPP) to anthranilate to yield N-(5'-phosphoribosyl)-anthranilate (PRA). This chain is Anthranilate phosphoribosyltransferase, found in Roseobacter denitrificans (strain ATCC 33942 / OCh 114) (Erythrobacter sp. (strain OCh 114)).